A 115-amino-acid chain; its full sequence is Ribosome-binding factor A (115 aa).

Belongs to the RbfA family. Monomer. Binds 30S ribosomal subunits, but not 50S ribosomal subunits or 70S ribosomes.

It localises to the cytoplasm. One of several proteins that assist in the late maturation steps of the functional core of the 30S ribosomal subunit. Associates with free 30S ribosomal subunits (but not with 30S subunits that are part of 70S ribosomes or polysomes). Required for efficient processing of 16S rRNA. May interact with the 5'-terminal helix region of 16S rRNA. In Bacillus velezensis (strain DSM 23117 / BGSC 10A6 / LMG 26770 / FZB42) (Bacillus amyloliquefaciens subsp. plantarum), this protein is Ribosome-binding factor A.